The primary structure comprises 576 residues: DM7 family protein GD16138 (576 aa).

A disordered region spans residues phenylalanine 454–lysine 481. Over residues leucine 457–glutamate 478 the composition is skewed to acidic residues.

The protein belongs to the DM7 family.

In Drosophila simulans (Fruit fly), this protein is DM7 family protein GD16138.